A 172-amino-acid polypeptide reads, in one-letter code: Nicotinamide-nucleotide adenylyltransferase (172 aa).

The protein belongs to the archaeal NMN adenylyltransferase family.

The protein resides in the cytoplasm. The enzyme catalyses beta-nicotinamide D-ribonucleotide + ATP + H(+) = diphosphate + NAD(+). Its pathway is cofactor biosynthesis; NAD(+) biosynthesis; NAD(+) from nicotinamide D-ribonucleotide: step 1/1. This chain is Nicotinamide-nucleotide adenylyltransferase, found in Aeropyrum pernix (strain ATCC 700893 / DSM 11879 / JCM 9820 / NBRC 100138 / K1).